Reading from the N-terminus, the 874-residue chain is Leucine--tRNA ligase (874 aa).

The 'HIGH' region signature appears at 43 to 53 (PYPSGRIHIGH). The interval 614-634 (LDDGSPVTVGPPEKMSKSKKN) is disordered. The 'KMSKS' region motif lies at 627-631 (KMSKS). Residue Lys630 participates in ATP binding.

Belongs to the class-I aminoacyl-tRNA synthetase family.

The protein resides in the cytoplasm. The catalysed reaction is tRNA(Leu) + L-leucine + ATP = L-leucyl-tRNA(Leu) + AMP + diphosphate. In Azorhizobium caulinodans (strain ATCC 43989 / DSM 5975 / JCM 20966 / LMG 6465 / NBRC 14845 / NCIMB 13405 / ORS 571), this protein is Leucine--tRNA ligase.